Reading from the N-terminus, the 158-residue chain is Small ribosomal subunit protein uS15 (158 aa).

Positions 1–18 (MARMHARKRGKSGSKRPP) are enriched in basic residues. The tract at residues 1-21 (MARMHARKRGKSGSKRPPRTA) is disordered.

It belongs to the universal ribosomal protein uS15 family. Part of the 30S ribosomal subunit.

The sequence is that of Small ribosomal subunit protein uS15 from Pyrococcus horikoshii (strain ATCC 700860 / DSM 12428 / JCM 9974 / NBRC 100139 / OT-3).